The following is a 103-amino-acid chain: Large ribosomal subunit protein bL21 (103 aa).

Belongs to the bacterial ribosomal protein bL21 family. In terms of assembly, part of the 50S ribosomal subunit. Contacts protein L20.

In terms of biological role, this protein binds to 23S rRNA in the presence of protein L20. The sequence is that of Large ribosomal subunit protein bL21 from Pseudomonas syringae pv. tomato (strain ATCC BAA-871 / DC3000).